Reading from the N-terminus, the 61-residue chain is Phospholipase A2 (61 aa).

Positions 27, 29, and 31 each coordinate Ca(2+). An intrachain disulfide couples Cys28 to Cys35. His38 is a catalytic residue. Asp39 is a binding site for Ca(2+). Residues Cys41 and Cys59 are joined by a disulfide bond. The active site involves Asp60.

It belongs to the phospholipase A2 family. Group II subfamily. D49 sub-subfamily. In terms of assembly, homodimer. The cofactor is Ca(2+). Expressed by the venom gland.

Its subcellular location is the secreted. The catalysed reaction is a 1,2-diacyl-sn-glycero-3-phosphocholine + H2O = a 1-acyl-sn-glycero-3-phosphocholine + a fatty acid + H(+). Functionally, snake venom phospholipase A2 (PLA2) that displays edema-inducing activities. PLA2 catalyzes the calcium-dependent hydrolysis of the 2-acyl groups in 3-sn-phosphoglycerides. The sequence is that of Phospholipase A2 from Crotalus atrox (Western diamondback rattlesnake).